A 126-amino-acid chain; its full sequence is Large ribosomal subunit protein uL22 (126 aa).

This sequence belongs to the universal ribosomal protein uL22 family. As to quaternary structure, part of the 50S ribosomal subunit.

This protein binds specifically to 23S rRNA; its binding is stimulated by other ribosomal proteins, e.g. L4, L17, and L20. It is important during the early stages of 50S assembly. It makes multiple contacts with different domains of the 23S rRNA in the assembled 50S subunit and ribosome. In terms of biological role, the globular domain of the protein is located near the polypeptide exit tunnel on the outside of the subunit, while an extended beta-hairpin is found that lines the wall of the exit tunnel in the center of the 70S ribosome. The protein is Large ribosomal subunit protein uL22 of Caulobacter vibrioides (strain ATCC 19089 / CIP 103742 / CB 15) (Caulobacter crescentus).